A 334-amino-acid chain; its full sequence is GTPase Obg (334 aa).

Residues 1–159 (MRFVDEVVIK…KEVRLELNLL (159 aa)) form the Obg domain. The OBG-type G domain maps to 160–331 (ADVALLGLPN…LAKKLNEFLQ (172 aa)). Residues 166 to 173 (GLPNAGKS), 191 to 195 (FTTMY), 212 to 215 (DIPG), 282 to 285 (NKID), and 312 to 314 (SAA) contribute to the GTP site. The Mg(2+) site is built by Ser173 and Thr193.

Belongs to the TRAFAC class OBG-HflX-like GTPase superfamily. OBG GTPase family. In terms of assembly, monomer. Mg(2+) is required as a cofactor.

Its subcellular location is the cytoplasm. An essential GTPase which binds GTP, GDP and possibly (p)ppGpp with moderate affinity, with high nucleotide exchange rates and a fairly low GTP hydrolysis rate. Plays a role in control of the cell cycle, stress response, ribosome biogenesis and in those bacteria that undergo differentiation, in morphogenesis control. This is GTPase Obg from Francisella tularensis subsp. holarctica (strain FTNF002-00 / FTA).